Consider the following 210-residue polypeptide: Large ribosomal subunit protein uL3 (210 aa).

The segment at 121-150 is disordered; sequence GGIKRHGFHRGPMAHGSKYHRRPGSLGAKG.

The protein belongs to the universal ribosomal protein uL3 family. In terms of assembly, part of the 50S ribosomal subunit. Forms a cluster with proteins L14 and L19.

In terms of biological role, one of the primary rRNA binding proteins, it binds directly near the 3'-end of the 23S rRNA, where it nucleates assembly of the 50S subunit. In Pelotomaculum thermopropionicum (strain DSM 13744 / JCM 10971 / SI), this protein is Large ribosomal subunit protein uL3.